A 407-amino-acid chain; its full sequence is MEERRVSISSITWRFPMLFAPVDDVTTIDDLTLDPYPIYRRMRVQNPVVHVASVRRTFLTKAFDTKMVKDDPSRFSSDDPSTPMKPAFQAHTLMRKDGTEHARERMAMARAFAPKAIADHWAPIYRDIVNEYLDRLPRGDTVDLFAEICGPVAARILAHILGICEASDVEIIRWSQRLIDGAGNFGWRSELFERSDEANAEMNCLFNDLVKKHRSAPNPSAFATMLNAPDPIPLSQIYANIKIAIGGGVNEPRDALGTILYGLLTNPEQLEEVKRQQCWGQAFEEGLRWVAPIQASSRLVREDTEIRGFIVPKGDIVMTIQASANRDEDVFEDGESFNVFRPKSAHQSFGSGPHHCPGAQISRQTVGAIMLPILFDRFPDMILPHPELVQWRGFGFRGPINLPVTLR.

Residue Cys356 participates in heme binding.

It belongs to the cytochrome P450 family. The cofactor is heme.

Functionally, not essential for virulence, but may be involved in the detoxification of plant protective agents at the site of wounding. This chain is Cytochrome P450-pinF2, plant-inducible (cyp104), found in Rhizobium radiobacter (Agrobacterium tumefaciens).